The following is a 688-amino-acid chain: Methionine--tRNA ligase (688 aa).

The short motif at proline 13–histidine 23 is the 'HIGH' region element. Zn(2+) is bound by residues cysteine 144, cysteine 147, cysteine 157, and cysteine 160. Positions lysine 334–serine 338 match the 'KMSKS' region motif. Lysine 337 is an ATP binding site. In terms of domain architecture, tRNA-binding spans aspartate 582–arginine 688.

Belongs to the class-I aminoacyl-tRNA synthetase family. MetG type 1 subfamily. In terms of assembly, homodimer. It depends on Zn(2+) as a cofactor.

It is found in the cytoplasm. It catalyses the reaction tRNA(Met) + L-methionine + ATP = L-methionyl-tRNA(Met) + AMP + diphosphate. Functionally, is required not only for elongation of protein synthesis but also for the initiation of all mRNA translation through initiator tRNA(fMet) aminoacylation. This chain is Methionine--tRNA ligase, found in Ralstonia nicotianae (strain ATCC BAA-1114 / GMI1000) (Ralstonia solanacearum).